Reading from the N-terminus, the 29-residue chain is Galanin (29 aa).

A Threonine amide modification is found at Thr29.

Belongs to the galanin family.

It localises to the secreted. Functionally, contracts smooth muscle of the gastrointestinal and genitourinary tract, regulates growth hormone release, modulates insulin release, and may be involved in the control of adrenal secretion. The protein is Galanin (GAL) of Gallus gallus (Chicken).